A 314-amino-acid chain; its full sequence is Methionyl-tRNA formyltransferase (314 aa).

A (6S)-5,6,7,8-tetrahydrofolate-binding site is contributed by 113-116 (SLLP).

The protein belongs to the Fmt family.

It carries out the reaction L-methionyl-tRNA(fMet) + (6R)-10-formyltetrahydrofolate = N-formyl-L-methionyl-tRNA(fMet) + (6S)-5,6,7,8-tetrahydrofolate + H(+). In terms of biological role, attaches a formyl group to the free amino group of methionyl-tRNA(fMet). The formyl group appears to play a dual role in the initiator identity of N-formylmethionyl-tRNA by promoting its recognition by IF2 and preventing the misappropriation of this tRNA by the elongation apparatus. This is Methionyl-tRNA formyltransferase from Serratia proteamaculans (strain 568).